The primary structure comprises 255 residues: UPF0246 protein BVU_0413 (255 aa).

The protein belongs to the UPF0246 family.

The polypeptide is UPF0246 protein BVU_0413 (Phocaeicola vulgatus (strain ATCC 8482 / DSM 1447 / JCM 5826 / CCUG 4940 / NBRC 14291 / NCTC 11154) (Bacteroides vulgatus)).